The following is a 258-amino-acid chain: tRNA pseudouridine synthase A (258 aa).

The active-site Nucleophile is the D52. A substrate-binding site is contributed by Y111.

It belongs to the tRNA pseudouridine synthase TruA family. Homodimer.

It catalyses the reaction uridine(38/39/40) in tRNA = pseudouridine(38/39/40) in tRNA. In terms of biological role, formation of pseudouridine at positions 38, 39 and 40 in the anticodon stem and loop of transfer RNAs. This chain is tRNA pseudouridine synthase A, found in Azorhizobium caulinodans (strain ATCC 43989 / DSM 5975 / JCM 20966 / LMG 6465 / NBRC 14845 / NCIMB 13405 / ORS 571).